The chain runs to 216 residues: TATA-box-binding protein-like 1 (216 aa).

Tandem repeats lie at residues 38-121 (KPVI…QRLG) and 126-210 (FNHF…ILLQ).

It belongs to the TBP family.

It is found in the nucleus. In terms of biological role, TATA box-binding transcription factor. Members of the TBP family are differentially required to regulate transcription and development during early embryogenesis. The chain is TATA-box-binding protein-like 1 (trf1) from Entamoeba histolytica (strain ATCC 30459 / HM-1:IMSS / ABRM).